We begin with the raw amino-acid sequence, 466 residues long: Ribulose bisphosphate carboxylase large chain (466 aa).

Residue K5 is modified to N6,N6,N6-trimethyllysine. Substrate contacts are provided by N114 and T164. K166 acts as the Proton acceptor in catalysis. Residue K168 participates in substrate binding. Residues K192, D194, and E195 each coordinate Mg(2+). K192 bears the N6-carboxylysine mark. The active-site Proton acceptor is H285. Positions 286, 318, and 370 each coordinate substrate.

Belongs to the RuBisCO large chain family. Type I subfamily. In terms of assembly, heterohexadecamer of 8 large chains and 8 small chains; disulfide-linked. The disulfide link is formed within the large subunit homodimers. It depends on Mg(2+) as a cofactor. Post-translationally, the disulfide bond which can form in the large chain dimeric partners within the hexadecamer appears to be associated with oxidative stress and protein turnover.

It is found in the plastid. It localises to the chloroplast. The catalysed reaction is 2 (2R)-3-phosphoglycerate + 2 H(+) = D-ribulose 1,5-bisphosphate + CO2 + H2O. The enzyme catalyses D-ribulose 1,5-bisphosphate + O2 = 2-phosphoglycolate + (2R)-3-phosphoglycerate + 2 H(+). RuBisCO catalyzes two reactions: the carboxylation of D-ribulose 1,5-bisphosphate, the primary event in carbon dioxide fixation, as well as the oxidative fragmentation of the pentose substrate in the photorespiration process. Both reactions occur simultaneously and in competition at the same active site. The polypeptide is Ribulose bisphosphate carboxylase large chain (Betula nigra (River birch)).